We begin with the raw amino-acid sequence, 445 residues long: ATP synthase subunit b-delta (445 aa).

The interval 1-168 (MSIFIGQLIG…PSSVVIDTAA (168 aa)) is ATP synthase subunit b. Residues 3–23 (IFIGQLIGFAVIAFIIVKWVV) traverse the membrane as a helical segment. Residues 169–445 (TSRLRAASRQ…LAAAQTGLPD (277 aa)) are ATP synthase subunit delta.

In the N-terminal section; belongs to the ATPase B chain family. This sequence in the C-terminal section; belongs to the ATPase delta chain family. As to quaternary structure, F-type ATPases have 2 components, F(1) - the catalytic core - and F(0) - the membrane proton channel. F(1) has five subunits: alpha(3), beta(3), gamma(1), delta(1), epsilon(1). F(0) has three main subunits: a(1), b(2) and c(10-14). The alpha and beta chains form an alternating ring which encloses part of the gamma chain. F(1) is attached to F(0) by a central stalk formed by the gamma and epsilon chains, while a peripheral stalk is formed by the delta and b chains.

The protein localises to the cell membrane. In terms of biological role, f(1)F(0) ATP synthase produces ATP from ADP in the presence of a proton or sodium gradient. F-type ATPases consist of two structural domains, F(1) containing the extramembraneous catalytic core and F(0) containing the membrane proton channel, linked together by a central stalk and a peripheral stalk. During catalysis, ATP synthesis in the catalytic domain of F(1) is coupled via a rotary mechanism of the central stalk subunits to proton translocation. Its function is as follows. This fusion protein includes a component of the F(0) channel (subunit b) and of the F(1) subunit (subunit delta). Two copies of subunit b and one of delta together form the peripheral 'stator' stalk which links F(1) to F(0). The polypeptide is ATP synthase subunit b-delta (atpFH) (Mycolicibacterium smegmatis (strain ATCC 700084 / mc(2)155) (Mycobacterium smegmatis)).